The chain runs to 143 residues: MSTESAKPALSQEAIVAQFQQLRNEQRNLVNSLNTLEMDLREHKTVIETLEAADPERKCFRQIGGVLCERTVKEVLPQLVENKDFIAKTIQMVTNDLSKKGSELNKFKEEHNIKIRGEHLVAEGAKGDDAEDKAENRNVLVFN.

This sequence belongs to the prefoldin subunit beta family. In terms of assembly, heterohexamer of two PFD-alpha type and four PFD-beta type subunits.

Functionally, binds specifically to cytosolic chaperonin (c-CPN) and transfers target proteins to it. Binds to nascent polypeptide chain and promotes folding in an environment in which there are many competing pathways for nonnative proteins. This chain is Probable prefoldin subunit 2, found in Drosophila melanogaster (Fruit fly).